The following is a 240-amino-acid chain: NAD-dependent protein deacylase Sir2 (240 aa).

The Deacetylase sirtuin-type domain maps to 1–235 (MQVTVLSGAG…PTLLQRLPEL (235 aa)). 8–28 (GAGISAESGVPTFRDAETGLW) contributes to the NAD(+) binding site. 2 residues coordinate substrate: Y53 and R56. 86 to 89 (QNID) contacts NAD(+). H104 acts as the Proton acceptor in catalysis. The Zn(2+) site is built by C112, C115, C138, and C140. NAD(+) is bound by residues 177 to 179 (GTS), 203 to 205 (NPE), and A221.

It belongs to the sirtuin family. Class III subfamily. As to quaternary structure, interacts with both Ku and LigD; may form a trimeric complex during NHEJ. Requires Zn(2+) as cofactor.

The protein resides in the cytoplasm. The enzyme catalyses N(6)-succinyl-L-lysyl-[protein] + NAD(+) + H2O = 2''-O-succinyl-ADP-D-ribose + nicotinamide + L-lysyl-[protein]. It carries out the reaction N(6)-acetyl-L-lysyl-[protein] + NAD(+) + H2O = 2''-O-acetyl-ADP-D-ribose + nicotinamide + L-lysyl-[protein]. NAD-dependent lysine deacetylase and desuccinylase that specifically removes acetyl and succinyl groups on target proteins. Modulates the activities of several proteins which are inactive in their acylated form. In terms of biological role, involved in non-homologous end joining (NHEJ) repair of blunt, 5' overhang and 3' overhang DNA double strand breaks (DSB). Overexpression increases the efficiency of NHEJ of the above DSBs 2-fold with no effect on repair fidelity. In Mycolicibacterium smegmatis (strain ATCC 700084 / mc(2)155) (Mycobacterium smegmatis), this protein is NAD-dependent protein deacylase Sir2 (sir2).